The chain runs to 142 residues: Large ribosomal subunit protein uL13 (142 aa).

Belongs to the universal ribosomal protein uL13 family. In terms of assembly, part of the 50S ribosomal subunit.

Functionally, this protein is one of the early assembly proteins of the 50S ribosomal subunit, although it is not seen to bind rRNA by itself. It is important during the early stages of 50S assembly. This chain is Large ribosomal subunit protein uL13, found in Pyrococcus furiosus (strain ATCC 43587 / DSM 3638 / JCM 8422 / Vc1).